The following is a 319-amino-acid chain: ATP-dependent 6-phosphofructokinase (319 aa).

Residue glycine 11 participates in ATP binding. 21–25 is a binding site for ADP; it reads RAVVR. Residues 72–73 and 102–105 each bind ATP; these read RC and GDGS. A Mg(2+)-binding site is contributed by aspartate 103. Substrate is bound at residue 125–127; sequence TID. Aspartate 127 acts as the Proton acceptor in catalysis. ADP is bound at residue arginine 154. Substrate is bound by residues arginine 162 and 169–171; that span reads MGR. Residues 185-187, arginine 211, and 213-215 each bind ADP; these read GAE and KKH. Substrate-binding positions include glutamate 222, arginine 243, and 249–252; that span reads HIQR.

The protein belongs to the phosphofructokinase type A (PFKA) family. ATP-dependent PFK group I subfamily. Prokaryotic clade 'B1' sub-subfamily. As to quaternary structure, homotetramer. The cofactor is Mg(2+).

The protein localises to the cytoplasm. The enzyme catalyses beta-D-fructose 6-phosphate + ATP = beta-D-fructose 1,6-bisphosphate + ADP + H(+). The protein operates within carbohydrate degradation; glycolysis; D-glyceraldehyde 3-phosphate and glycerone phosphate from D-glucose: step 3/4. Allosterically activated by ADP and other diphosphonucleosides, and allosterically inhibited by phosphoenolpyruvate. In terms of biological role, catalyzes the phosphorylation of D-fructose 6-phosphate to fructose 1,6-bisphosphate by ATP, the first committing step of glycolysis. This chain is ATP-dependent 6-phosphofructokinase, found in Bacillus licheniformis (strain ATCC 14580 / DSM 13 / JCM 2505 / CCUG 7422 / NBRC 12200 / NCIMB 9375 / NCTC 10341 / NRRL NRS-1264 / Gibson 46).